The chain runs to 353 residues: Bone morphogenetic protein 2 (353 aa).

The propeptide occupies Gly-1–Arg-239. 3 N-linked (GlcNAc...) asparagine glycosylation sites follow: Asn-91, Asn-121, and Asn-157. Residues Gly-228–Arg-248 are disordered. Residues His-231–Arg-248 are compositionally biased toward basic residues. Cystine bridges form between Cys-253–Cys-318, Cys-282–Cys-350, and Cys-286–Cys-352. The N-linked (GlcNAc...) asparagine glycan is linked to Asn-295.

It belongs to the TGF-beta family. As to quaternary structure, homodimer; disulfide-linked.

It is found in the secreted. Functionally, negatively regulates the structure and function of the limb apical ectodermal ridge. The polypeptide is Bone morphogenetic protein 2 (BMP2) (Gallus gallus (Chicken)).